The sequence spans 313 residues: Sorting nexin-20 (313 aa).

A disordered region spans residues 1-61 (MASPQHPGGP…MTTRELQEHW (61 aa)). Phosphoserine is present on Ser-3. The span at 29–38 (PPGPDLPCPG) shows a compositional bias: pro residues. The segment covering 45–55 (GPTSNSNMTTR) has biased composition (polar residues). Positions 71-188 (VRLLFEIASA…DFLTRPELCE (118 aa)) constitute a PX domain. Residues Arg-113, Ser-115, Lys-140, and Arg-154 each coordinate a 1,2-diacyl-sn-glycero-3-phospho-(1D-myo-inositol-3-phosphate).

Belongs to the sorting nexin family. As to quaternary structure, interacts with SELPLG. Interaction with SELPLG is controversial.

It is found in the early endosome membrane. It localises to the cell membrane. Its subcellular location is the cytoplasm. The protein resides in the nucleus. In terms of biological role, may play a role in cellular vesicle trafficking. Has been proposed to function as a sorting protein that targets SELPLG into endosomes, but has no effect on SELPLG internalization from the cell surface, or on SELPLG-mediated cell-cell adhesion. The chain is Sorting nexin-20 (Snx20) from Rattus norvegicus (Rat).